A 309-amino-acid chain; its full sequence is Putative HTH-type transcriptional regulatory protein AF_1787 (309 aa).

Residues 131–185 (IREARERLGLSVGDMAKMLGVSRRTVKKYEEGTDTTLSTAAKIEEIIGTFAIKEI) enclose the HTH cro/C1-type domain. The H-T-H motif DNA-binding region spans 142–161 (VGDMAKMLGVSRRTVKKYEE).

This Archaeoglobus fulgidus (strain ATCC 49558 / DSM 4304 / JCM 9628 / NBRC 100126 / VC-16) protein is Putative HTH-type transcriptional regulatory protein AF_1787.